The sequence spans 244 residues: MIIEIVTIFPLFFKSFCDNSIIKRALNQQKVQIKIHDLRKYSVNKHQQVDDCVYGGGVGMLLSFPPFFDCLQEIKTPQSKVILLSPQGKIFDQVQANNYASNTPHLIILCGNYEGVDARILKYVDQEISIGDYVLTGGEIAATVVVDAIVRLIPGVIKHESAFSDSHQQGLLKFPQYTRPQIYQNQEVPSVLLSGNHAQIENWRQKESLKITLQKRPDLLINKKLSSKEKVILEEIKQELKNNS.

S-adenosyl-L-methionine-binding positions include Gly-111 and 130 to 135 (IGDYVL).

This sequence belongs to the RNA methyltransferase TrmD family. Homodimer.

It localises to the cytoplasm. The catalysed reaction is guanosine(37) in tRNA + S-adenosyl-L-methionine = N(1)-methylguanosine(37) in tRNA + S-adenosyl-L-homocysteine + H(+). Specifically methylates guanosine-37 in various tRNAs. This chain is tRNA (guanine-N(1)-)-methyltransferase, found in Phytoplasma australiense.